Consider the following 148-residue polypeptide: MKALLIVGLLLLSVAVQGKKFQRCELARTLKKLGLDGYRGVSLANWVCLARWESNYNTRATNYNRGDKSTDYGIFQINSRWWCNDGKTPKAVNACRIPCSALLKDDITQAVACAKRVVRDPQGIKAWVAWRNKCQNRDLRSYVQGCRV.

An N-terminal signal peptide occupies residues 1 to 18; the sequence is MKALLIVGLLLLSVAVQG. The region spanning 19–148 is the C-type lysozyme domain; that stretch reads KKFQRCELAR…LRSYVQGCRV (130 aa). 4 cysteine pairs are disulfide-bonded: cysteine 24–cysteine 146, cysteine 48–cysteine 134, cysteine 83–cysteine 99, and cysteine 95–cysteine 113. Catalysis depends on residues glutamate 53 and aspartate 71.

This sequence belongs to the glycosyl hydrolase 22 family.

The catalysed reaction is Hydrolysis of (1-&gt;4)-beta-linkages between N-acetylmuramic acid and N-acetyl-D-glucosamine residues in a peptidoglycan and between N-acetyl-D-glucosamine residues in chitodextrins.. Lysozymes have primarily a bacteriolytic function; those in tissues and body fluids are associated with the monocyte-macrophage system and enhance the activity of immunoagents. The sequence is that of Lysozyme C, milk isozyme from Bos taurus (Bovine).